The primary structure comprises 586 residues: MGGLEKKKYERGSATNYITRNKARKKLQLSLPDFRRLCILKGIYPHEPKHKKKVNKGSTAARTFYLIKDIKFLLHEPIVNKFREYKVFVRKLRKAYGKSEWNAVERLKDNKPSYKLDHIVKERYPTFIDALRDLDDALSMCFLFSTFPRTGKCHVQTIQLCRRLTVEFMHYVIAARALRKVFLSIKGIYYQAEVLGQPIVWIAPYAFSHDHPTDVDYRVMATFTEFYTTLLGFVNFRLYQSLNLHYPPKIESQAQAEMKVSEDTYALDSESSMEKLAALSASLARVVVPAVEEAEADEFPTDGEVTAQEEDRRKELEAQEKHKKLFEGLKFFLNREVPREALAFIIRSFGGDVSWDKSLCIGATYDSTDSGITHQIVDRPGQQTPIIGRYYVQPQWVFDCVNARLLLPVAEYFPGVQLPPHLSPFVSEKEGDYIPPEKLKLLALQRGEDPGNLEEEEEDEDDEGDDSEGDGDVAVENEEEVVEAESEEEEEAHLSALEQQRLGGKKPQVMAGTVKLEDRQRLAQEEESEAKRLAIMMMKKREKYLYQKIMFGKRRKIREANKLAEKRKAHDDAVRSEKKAKRTRPV.

The segment at 1 to 54 (MGGLEKKKYERGSATNYITRNKARKKLQLSLPDFRRLCILKGIYPHEPKHKKKV) is required for 28S ribosomal RNA processing. Residues 1–257 (MGGLEKKKYE…PKIESQAQAE (257 aa)) are sufficient for nucleolar localization. Lys98 carries the N6-acetyllysine modification. Positions 305–414 (VTAQEEDRRK…LLLPVAEYFP (110 aa)) are sufficient for interaction with MAP1B. In terms of domain architecture, BRCT spans 321-414 (KHKKLFEGLK…LLLPVAEYFP (94 aa)). A disordered region spans residues 447 to 508 (GEDPGNLEEE…QQRLGGKKPQ (62 aa)). Residues 451 to 491 (GNLEEEEEDEDDEGDDSEGDGDVAVENEEEVVEAESEEEEE) show a composition bias toward acidic residues. Lys515 participates in a covalent cross-link: Glycyl lysine isopeptide (Lys-Gly) (interchain with G-Cter in SUMO1); alternate. A Glycyl lysine isopeptide (Lys-Gly) (interchain with G-Cter in SUMO2); alternate cross-link involves residue Lys515. The tract at residues 537-586 (MMKKREKYLYQKIMFGKRRKIREANKLAEKRKAHDDAVRSEKKAKRTRPV) is required for 28S ribosomal RNA processing. Positions 562–577 (KLAEKRKAHDDAVRSE) are enriched in basic and acidic residues. Residues 562-586 (KLAEKRKAHDDAVRSEKKAKRTRPV) form a disordered region.

Belongs to the pescadillo family. As to quaternary structure, component of the PeBoW complex, composed of BOP1, PES1 and WDR12. The complex is held together by BOP1, which interacts with PES1 via its N-terminal domain and with WDR12 via a high-affinity interaction between the seven-bladed beta-propeller domains of the 2 proteins. The PeBoW complex associates with the 66S pre-ribosome. The PeBoW complex also associates with DDX27, PES1 interacts directly with DDX27. Interacts with IRS1 and UBTF. May interact with MAP1B. Post-translationally, sumoylated.

It is found in the nucleus. It localises to the nucleolus. The protein resides in the nucleoplasm. Its subcellular location is the chromosome. Component of the PeBoW complex, which is required for maturation of 28S and 5.8S ribosomal RNAs and formation of the 60S ribosome. This Rattus norvegicus (Rat) protein is Pescadillo homolog (Pes1).